Reading from the N-terminus, the 365-residue chain is Putative F-box protein At1g31000 (365 aa).

Positions 15 to 62 (NDSDSVRIDIVIEIVKRLPLKDVSRFLLVSKLWSEIIRSPYFIRSFPF) constitute an F-box domain.

The sequence is that of Putative F-box protein At1g31000 from Arabidopsis thaliana (Mouse-ear cress).